Consider the following 168-residue polypeptide: CDP-archaeol synthase (168 aa).

5 helical membrane-spanning segments follow: residues 7 to 27 (PLES…PVLL), 55 to 75 (GLAT…SATC), 80 to 100 (YAAG…GAFI), 109 to 129 (GAPA…LALY), and 130 to 150 (AAGY…VIAL).

It belongs to the CDP-archaeol synthase family. The cofactor is Mg(2+).

The protein localises to the cell membrane. The enzyme catalyses 2,3-bis-O-(geranylgeranyl)-sn-glycerol 1-phosphate + CTP + H(+) = CDP-2,3-bis-O-(geranylgeranyl)-sn-glycerol + diphosphate. It participates in membrane lipid metabolism; glycerophospholipid metabolism. In terms of biological role, catalyzes the formation of CDP-2,3-bis-(O-geranylgeranyl)-sn-glycerol (CDP-archaeol) from 2,3-bis-(O-geranylgeranyl)-sn-glycerol 1-phosphate (DGGGP) and CTP. This reaction is the third ether-bond-formation step in the biosynthesis of archaeal membrane lipids. The sequence is that of CDP-archaeol synthase from Hyperthermus butylicus (strain DSM 5456 / JCM 9403 / PLM1-5).